An 81-amino-acid chain; its full sequence is Sulfur carrier protein TusA (81 aa).

C19 serves as the catalytic Cysteine persulfide intermediate.

This sequence belongs to the sulfur carrier protein TusA family.

It is found in the cytoplasm. Its function is as follows. Sulfur carrier protein which probably makes part of a sulfur-relay system. The chain is Sulfur carrier protein TusA from Aeromonas salmonicida (strain A449).